Consider the following 521-residue polypeptide: Transcription activator of gluconeogenesis SS1G_02293 (521 aa).

Residues 1-12 (MSGETEIDDPEV) show a composition bias toward acidic residues. The segment at 1 to 75 (MSGETEIDDP…KFDPKDPLRP (75 aa)) is disordered. 2 stretches are compositionally biased toward basic and acidic residues: residues 21-49 (YSDH…RPDG) and 65-74 (PKFDPKDPLR). Residues 84-112 (CFACQRAHLTCGDERPCQRCIKRGLADAC) constitute a DNA-binding region (zn(2)-C6 fungal-type). Disordered regions lie at residues 273 to 308 (SGSA…NPPF), 322 to 358 (VAPP…RDPS), and 478 to 501 (NTGN…PRMR). Residues 275–287 (SAETPPQDSSAGM) show a composition bias toward polar residues. Composition is skewed to low complexity over residues 297-308 (NNNPAFNNNPPF), 337-351 (KSGP…SALG), and 480-494 (GNSG…GRGS). The PAS domain occupies 426–497 (TLFEYEDFML…GSSGRGSFTT (72 aa)).

This sequence belongs to the ERT1/acuK family.

Its subcellular location is the nucleus. In terms of biological role, transcription factor which regulates nonfermentable carbon utilization. Activator of gluconeogenetic genes. The polypeptide is Transcription activator of gluconeogenesis SS1G_02293 (Sclerotinia sclerotiorum (strain ATCC 18683 / 1980 / Ss-1) (White mold)).